The sequence spans 186 residues: MVDVKTIIEESQEKMDMAVMYLEEALAHIRAGKASTRLLDGIRVDSYGSMVPISNVAAVTTPDARSITIKPWDKSMFRVIEKAIIDSDLGIMPENNGEIIRIGIPPLTEERRKQLAKQCKAEGETAKVSIRNARRDGIDALKKAVKDGLAEDEQKNAEAKLQKVHDKYIAKIEEMLAEKDKEIMTV.

The protein belongs to the RRF family.

The protein resides in the cytoplasm. Functionally, responsible for the release of ribosomes from messenger RNA at the termination of protein biosynthesis. May increase the efficiency of translation by recycling ribosomes from one round of translation to another. The sequence is that of Ribosome-recycling factor from Bacteroides fragilis (strain ATCC 25285 / DSM 2151 / CCUG 4856 / JCM 11019 / LMG 10263 / NCTC 9343 / Onslow / VPI 2553 / EN-2).